We begin with the raw amino-acid sequence, 1389 residues long: CRISPR-associated endoribonuclease Cas13a (1389 aa).

Residues 1-347 are NTD; the sequence is MGNLFGHKRW…DKHEKFKIER (347 aa). Residue R219 coordinates crRNA. Binds crRNA stretches follow at residues 330-342, 405-408, and 432-436; these read YIKS…KHEK, KKHY, and YRYLK. Residues 348–498 form a helical-1 region; it reads ENKKDKIVKF…KLRHNDIDMT (151 aa). Active-site for pre-crRNA processing residues include R438 and K441. Residue K441 coordinates crRNA. The binds crRNA stretch occupies residues 471 to 475; it reads KILKR. K489 is a binding site for crRNA. Residues 499 to 636 are HEPN-like fold 1-I; the sequence is TVNTDDFSRL…LKISDEEVSK (138 aa). Positions 502–509 are binds crRNA; sequence TDDFSRLH. Catalysis depends on for target ssRNA cleavage residues R597 and H602. Residues 637 to 828 are helical-2; it reads ALNLDVVFKD…ERITVKTSDK (192 aa). Q759 is a binding site for crRNA. An HEPN-like fold 1-II region spans residues 829-899; it reads TIVINDDFEY…ECITENWNLN (71 aa). The segment at 853 to 858 is binds crRNA; it reads NKIRNR. Residue W865 coordinates crRNA. 3 coiled-coil regions span residues 893 to 920, 968 to 1046, and 1101 to 1131; these read TENW…FKIQ, EIDK…FQEI, and KNKI…KYIK. Positions 900-1170 are linker; sequence LEEFIQKMKE…EYKKIRDLVE (271 aa). Residues 1170-1290 are HEPN-like fold 2; that stretch reads EFNYLNKIES…ISHFYIVRNP (121 aa). Residues R1278 and H1283 each act as for target ssRNA cleavage in the active site. 2 binds crRNA regions span residues 1311–1316 and 1338–1339; these read TRYNNS and KK.

Belongs to the CRISPR-associated endoribonuclease Cas13a family. As to quaternary structure, monomer. It depends on Mg(2+) as a cofactor.

RNase activity on target is decreased by EDTA. Target RNA acts as an activator for non-specific ssRNA degradation. Functionally, CRISPR (clustered regularly interspaced short palindromic repeat), is an adaptive immune system that provides protection against mobile genetic elements (viruses, transposable elements and conjugative plasmids). CRISPR clusters contain sequences complementary to antecedent mobile elements (spacers) and target invading nucleic acids. Unlike many single-component effectors, this CRISPR-Cas system targets RNA. CRISPR clusters are transcribed from pre-CRISPR RNA (crRNA) and processed into crRNA (optimally 28 nucleotides in this system) by this protein. This protein processes pre-crRNA at a 'non-typical' site 1 nucleotide upstream of the pre-crRNA stem-loop; it cleaves pre-crRNA from L.buccalis and L.wadei in a similar fashion, whereas the enzymes from the latter 2 bacteria cleave their own pre-crRNA 3 nt further upstream. When the appropriate target sequences are cloned into the CRISPR array, confers immunity to ssRNA(+) enterobacteria phage MS2. Cleaves linear target ssRNA in a crRNA-dependent fashion, preferentially before U residues; has no activity on partially dsRNA, ssDNA or dsDNA. RNA secondary structure surrounding the target influence the cleavage site and efficiency; unlike other CRISPR-Cas effectors Cas13a cleaves outside of the crRNA binding site. In the presence of a viable RNA target other RNAs are also degraded (called collateral RNA degradation), suggesting this type of CRISPR-Cas might also prevent viral spread by inducing programmed cell death or dormancy. This system has a 3' protospacer flanking site (PFS), it does not cleave when the 3' PFS is G (PFS is equivalent to PAM, the protospacer adjacent motif). Mutations of its active site residues results in an RNA-programmed RNA-binding protein. This Leptotrichia shahii (strain DSM 19757 / CCUG 47503 / CIP 107916 / JCM 16776 / LB37) protein is CRISPR-associated endoribonuclease Cas13a.